The primary structure comprises 417 residues: RH-like protein IA (417 aa).

11 helical membrane passes run 12 to 32 (CLPL…YFFT), 44 to 64 (LVAS…GFGF), 77 to 97 (VAFS…LDGF), 125 to 145 (ISVD…MVLV), 172 to 192 (IYVF…KPLP), 203 to 223 (TIPS…WPSF), 238 to 258 (VFNT…GSSL), 265 to 285 (ISMS…GTSC), 287 to 307 (LITS…ISIG), 331 to 351 (NFSL…VHHT), and 358 to 378 (MIGF…TIAL).

This sequence belongs to the ammonium transporter (TC 2.A.49) family. Rh subfamily.

The protein resides in the membrane. May be part of an oligomeric complex which is likely to have a transport or channel function in the erythrocyte membrane. The sequence is that of RH-like protein IA from Pan troglodytes (Chimpanzee).